We begin with the raw amino-acid sequence, 243 residues long: Small ribosomal subunit protein uS3 (243 aa).

Residue Ala-2 is modified to N-acetylalanine. Ser-6 is subject to Phosphoserine; by PKC/PRKCD. Positions 21–92 (LNEFLTRELA…SVELYAEKVA (72 aa)) constitute a KH type-2 domain. At Ser-35 the chain carries Phosphoserine. Phosphothreonine; by MAPK is present on Thr-42. Lys-62 is modified (N6-acetyllysine). Asymmetric dimethylarginine; by PRMT1 occurs at positions 64, 65, and 67. Thr-70 bears the Phosphothreonine; by PKB mark. A Glycyl lysine isopeptide (Lys-Gly) (interchain with G-Cter in ubiquitin) cross-link involves residue Lys-90. Ser-104 is subject to Phosphoserine. Lys-132 bears the N6-succinyllysine mark. Lys-202 is covalently cross-linked (Glycyl lysine isopeptide (Lys-Gly) (interchain with G-Cter in ubiquitin)). Ser-209 carries the phosphoserine; by IKKB modification. A Glycyl lysine isopeptide (Lys-Gly) (interchain with G-Cter in SUMO2); alternate cross-link involves residue Lys-214. Residue Lys-214 forms a Glycyl lysine isopeptide (Lys-Gly) (interchain with G-Cter in ubiquitin); alternate linkage. Residues 214-243 (KDEILPTTPISEQKGGKPEPPAMPQPVPTA) form a disordered region. A Phosphothreonine modification is found at Thr-220. Position 221 is a phosphothreonine; by CDK1 and PKC/PRKCD (Thr-221). Ser-224 is subject to Phosphoserine. A Glycyl lysine isopeptide (Lys-Gly) (interchain with G-Cter in SUMO2) cross-link involves residue Lys-230. The segment covering 231–243 (PEPPAMPQPVPTA) has biased composition (pro residues). Phosphothreonine is present on Thr-242.

This sequence belongs to the universal ribosomal protein uS3 family. Component of the 40S small ribosomal subunit. Identified in a IGF2BP1-dependent mRNP granule complex containing untranslated mRNAs. Interacts with HNRPD. Interacts with PRMT1; the interaction methylates RPS3. Interacts with SUMO1; the interaction sumoylates RPS3. Interacts with UBC9. Interacts with CDK1; the interaction phosphorylates RPS3. Interacts with PRKCD; the interaction phosphorylates RPS3. Interacts with PKB/AKT; the interaction phosphorylates RPS3. Interacts with E2F1; the interaction occurs in the absence of nerve growth factor and increases transcription of pro-apoptotic proteins BCL2L11/BIM and HRK/Dp5. Interacts with the base excision repair proteins APEX1 and OGG1; interaction with OGG1 increases OGG1 N-glycosylase activity. Interacts with UNG; the interaction increases the uracil excision activity of UNG1. Interacts with HSP90; the interaction prevents the ubiquitination and proteasome-dependent degradation of RPS3 and is suppressed by increased ROS levels. Interacts with TOM70; the interaction promotes translocation of RPS3 to the mitochondrion. Interacts (via N-terminus) with RELA (via N-terminus); the interaction enhances the DNA-binding activity of the NF-kappa-B p65-p50 complex. Interacts with NFKBIA; the interaction is direct and may bridge the interaction between RPS3 and RELA. Interacts with IKKB; the interaction phosphorylates RPS3 and enhances its translocation to the nucleus. Interacts (via KH domain) with MDM2 and TP53. Interacts with TRADD. Interacts with CRY1. Methylation by PRMT1 is required for import into the nucleolus and for ribosome assembly. In terms of processing, sumoylation by SUMO1 enhances protein stability through increased resistance to proteolysis. Sumoylation occurs at one or more of the three consensus sites, Lys-18, Lys-214 and Lys-230. Post-translationally, phosphorylation at Thr-221 by CDK1 occurs mainly in G2/M phase. Phosphorylation by PRKCD occurs on a non-ribosomal-associated form which results in translocation of RPS3 to the nucleus and enhances its endonuclease activity. Phosphorylated on Ser-209 by IKKB in response to activation of the NF-kappa-B p65-p50 complex which enhances the association of RPS3 with importin-alpha and mediates the nuclear translocation of RPS3. Phosphorylation by MAPK is required for translocation to the nucleus following exposure of cells to DNA damaging agents such as hydrogen peroxide. Phosphorylation by PKB/AKT mediates RPS3 nuclear translocation, enhances RPS3 endonuclease activity and suppresses RPS3-induced neuronal apoptosis. Ubiquitinated; ubiquitination is prevented by interaction with HSP90 which stabilizes the protein. Monoubiquitinated at Lys-214 by RNF10 and ZNF598 when a ribosome has stalled during translation of poly(A) sequences, leading to preclude synthesis of a long poly-lysine tail and initiate the ribosome quality control (RQC) pathway to degrade the potentially detrimental aberrant nascent polypeptide. Deubiquitinated at Lys-214 by USP10, preventing degradation by the proteasome and promoting 40S ribosome subunit recycling following ribosome dissociation. In terms of processing, ufmylated by UFL1.

It localises to the cytoplasm. The protein localises to the nucleus. The protein resides in the nucleolus. It is found in the mitochondrion inner membrane. Its subcellular location is the cytoskeleton. It localises to the spindle. The catalysed reaction is 2'-deoxyribonucleotide-(2'-deoxyribose 5'-phosphate)-2'-deoxyribonucleotide-DNA = a 3'-end 2'-deoxyribonucleotide-(2,3-dehydro-2,3-deoxyribose 5'-phosphate)-DNA + a 5'-end 5'-phospho-2'-deoxyribonucleoside-DNA + H(+). In terms of biological role, component of the small ribosomal subunit. The ribosome is a large ribonucleoprotein complex responsible for the synthesis of proteins in the cell. Has endonuclease activity and plays a role in repair of damaged DNA. Cleaves phosphodiester bonds of DNAs containing altered bases with broad specificity and cleaves supercoiled DNA more efficiently than relaxed DNA. Displays high binding affinity for 7,8-dihydro-8-oxoguanine (8-oxoG), a common DNA lesion caused by reactive oxygen species (ROS). Has also been shown to bind with similar affinity to intact and damaged DNA. Stimulates the N-glycosylase activity of the base excision protein OGG1. Enhances the uracil excision activity of UNG1. Also stimulates the cleavage of the phosphodiester backbone by APEX1. When located in the mitochondrion, reduces cellular ROS levels and mitochondrial DNA damage. Has also been shown to negatively regulate DNA repair in cells exposed to hydrogen peroxide. Plays a role in regulating transcription as part of the NF-kappa-B p65-p50 complex where it binds to the RELA/p65 subunit, enhances binding of the complex to DNA and promotes transcription of target genes. Represses its own translation by binding to its cognate mRNA. Binds to and protects TP53/p53 from MDM2-mediated ubiquitination. Involved in spindle formation and chromosome movement during mitosis by regulating microtubule polymerization. Involved in induction of apoptosis through its role in activation of CASP8. Induces neuronal apoptosis by interacting with the E2F1 transcription factor and acting synergistically with it to up-regulate pro-apoptotic proteins BCL2L11/BIM and HRK/Dp5. Interacts with TRADD following exposure to UV radiation and induces apoptosis by caspase-dependent JNK activation. The sequence is that of Small ribosomal subunit protein uS3 (RPS3) from Bos taurus (Bovine).